The primary structure comprises 1793 residues: Brefeldin A-inhibited guanine nucleotide-exchange protein 2 (1793 aa).

N-acetylalanine is present on Ala-2. 3 disordered regions span residues 45–71 (NSLQ…PGPL), 266–299 (TMSG…LLDS), and 579–606 (GSPQ…GGTS). Residues 55-66 (SSAATDSESESS) show a composition bias toward low complexity. Residues 270–281 (SGSGSGSGGQDG) are compositionally biased toward gly residues. Polar residues-rich tracts occupy residues 284-294 (GTTTVETTNPT) and 594-605 (GSDTYSESSGGT). Residue Ser-595 is modified to Phosphoserine. Residues 610 to 797 (AIEQRRAYKL…RSLYERITKH (188 aa)) enclose the SEC7 domain. Residue Glu-712 is part of the active site. Over residues 1311–1327 (NKYKGTSGKIPQSSLHS) the composition is skewed to polar residues. Positions 1311–1333 (NKYKGTSGKIPQSSLHSGKSGKQ) are disordered.

Homodimer.

The protein resides in the cytoplasm. Its subcellular location is the cytosol. It is found in the membrane. Inhibited by brefeldin A. In terms of biological role, activates the ARF proteins by exchanging bound GDP for free GTP. Plays a role in vesicular protein sorting. The protein is Brefeldin A-inhibited guanine nucleotide-exchange protein 2 (BIG2) of Arabidopsis thaliana (Mouse-ear cress).